We begin with the raw amino-acid sequence, 616 residues long: Dihydroxy-acid dehydratase (616 aa).

Residue D81 coordinates Mg(2+). Position 122 (C122) interacts with [2Fe-2S] cluster. Residues D123 and K124 each coordinate Mg(2+). K124 is modified (N6-carboxylysine). C195 is a binding site for [2Fe-2S] cluster. Residue E491 coordinates Mg(2+). S517 serves as the catalytic Proton acceptor.

This sequence belongs to the IlvD/Edd family. Homodimer. The cofactor is [2Fe-2S] cluster. Mg(2+) serves as cofactor.

It carries out the reaction (2R)-2,3-dihydroxy-3-methylbutanoate = 3-methyl-2-oxobutanoate + H2O. It catalyses the reaction (2R,3R)-2,3-dihydroxy-3-methylpentanoate = (S)-3-methyl-2-oxopentanoate + H2O. Its pathway is amino-acid biosynthesis; L-isoleucine biosynthesis; L-isoleucine from 2-oxobutanoate: step 3/4. It participates in amino-acid biosynthesis; L-valine biosynthesis; L-valine from pyruvate: step 3/4. In terms of biological role, functions in the biosynthesis of branched-chain amino acids. Catalyzes the dehydration of (2R,3R)-2,3-dihydroxy-3-methylpentanoate (2,3-dihydroxy-3-methylvalerate) into 2-oxo-3-methylpentanoate (2-oxo-3-methylvalerate) and of (2R)-2,3-dihydroxy-3-methylbutanoate (2,3-dihydroxyisovalerate) into 2-oxo-3-methylbutanoate (2-oxoisovalerate), the penultimate precursor to L-isoleucine and L-valine, respectively. In Yersinia pseudotuberculosis serotype I (strain IP32953), this protein is Dihydroxy-acid dehydratase.